The chain runs to 173 residues: Ribosome maturation factor RimM (173 aa).

Residues 96–169 (PDEFYDHQLE…LITIDPPDGL (74 aa)) enclose the PRC barrel domain.

The protein belongs to the RimM family. As to quaternary structure, binds ribosomal protein uS19.

It is found in the cytoplasm. An accessory protein needed during the final step in the assembly of 30S ribosomal subunit, possibly for assembly of the head region. Essential for efficient processing of 16S rRNA. May be needed both before and after RbfA during the maturation of 16S rRNA. It has affinity for free ribosomal 30S subunits but not for 70S ribosomes. The polypeptide is Ribosome maturation factor RimM (Mycolicibacterium gilvum (strain PYR-GCK) (Mycobacterium gilvum (strain PYR-GCK))).